The chain runs to 549 residues: Cytoplasmic trehalase (549 aa).

Substrate-binding positions include Arg-168, 175 to 176, Asn-212, 221 to 223, 292 to 294, and Gly-324; these read WD, RSQ, and RDE. Catalysis depends on proton donor/acceptor residues Asp-326 and Glu-509. Glu-525 lines the substrate pocket.

The protein belongs to the glycosyl hydrolase 37 family. In terms of assembly, monomer.

The protein resides in the cytoplasm. It catalyses the reaction alpha,alpha-trehalose + H2O = alpha-D-glucose + beta-D-glucose. It functions in the pathway glycan degradation; trehalose degradation; D-glucose from alpha,alpha-trehalose: step 1/1. Its function is as follows. Hydrolyzes trehalose to glucose. Could be involved, in cells returning to low osmolarity conditions, in the utilization of the accumulated cytoplasmic trehalose, which was synthesized in response to high osmolarity. This chain is Cytoplasmic trehalase, found in Escherichia coli O139:H28 (strain E24377A / ETEC).